Consider the following 161-residue polypeptide: Cytochrome c-type biogenesis protein CcmE (161 aa).

The Cytoplasmic segment spans residues 1-8 (MNPRRKKR). The helical; Signal-anchor for type II membrane protein transmembrane segment at 9-29 (LGIVLAIFIGISATIGLMLYA) threads the bilayer. The Periplasmic portion of the chain corresponds to 30 to 161 (LNQNMDLFYT…SSEQKQGSGE (132 aa)). Heme contacts are provided by histidine 129 and tyrosine 133. The segment at 142–161 (MKKTHEPLQYSSEQKQGSGE) is disordered. A compositionally biased stretch (polar residues) spans 150–161 (QYSSEQKQGSGE).

Belongs to the CcmE/CycJ family.

Its subcellular location is the cell inner membrane. Functionally, heme chaperone required for the biogenesis of c-type cytochromes. Transiently binds heme delivered by CcmC and transfers the heme to apo-cytochromes in a process facilitated by CcmF and CcmH. The sequence is that of Cytochrome c-type biogenesis protein CcmE from Vibrio parahaemolyticus serotype O3:K6 (strain RIMD 2210633).